Here is a 382-residue protein sequence, read N- to C-terminus: Cytochrome b (382 aa).

A run of 4 helical transmembrane segments spans residues 36–56 (FGSL…FLTM), 80–101 (WLIR…YLHI), 116–136 (WFIG…GYVL), and 181–201 (FYTF…IHLL). Heme b-binding residues include histidine 86 and histidine 100. Positions 185 and 199 each coordinate heme b. Histidine 204 lines the a ubiquinone pocket. 4 consecutive transmembrane segments (helical) span residues 229 to 249 (YKDL…TLSN), 291 to 311 (LGGV…PLTF), 323 to 343 (INQF…WIGA), and 350 to 370 (YIIT…LNPL).

Belongs to the cytochrome b family. As to quaternary structure, the main subunits of complex b-c1 are: cytochrome b, cytochrome c1 and the Rieske protein. The cofactor is heme b.

It is found in the mitochondrion inner membrane. Functionally, component of the ubiquinol-cytochrome c reductase complex (complex III or cytochrome b-c1 complex) that is part of the mitochondrial respiratory chain. The b-c1 complex mediates electron transfer from ubiquinol to cytochrome c. Contributes to the generation of a proton gradient across the mitochondrial membrane that is then used for ATP synthesis. This is Cytochrome b (MT-CYB) from Samia ricini (Indian eri silkmoth).